The chain runs to 508 residues: Photosystem II CP47 reaction center protein (508 aa).

Transmembrane regions (helical) follow at residues 21-36, 101-115, 140-156, 203-218, 237-252, and 457-472; these read SVHI…WAGS, IVFS…IWHW, GIHL…FGAF, IAAG…FHLS, VLSS…AFVV, and SFAL…HGAR.

It belongs to the PsbB/PsbC family. PsbB subfamily. As to quaternary structure, PSII is composed of 1 copy each of membrane proteins PsbA, PsbB, PsbC, PsbD, PsbE, PsbF, PsbH, PsbI, PsbJ, PsbK, PsbL, PsbM, PsbT, PsbX, PsbY, PsbZ, Psb30/Ycf12, at least 3 peripheral proteins of the oxygen-evolving complex and a large number of cofactors. It forms dimeric complexes. The cofactor is Binds multiple chlorophylls. PSII binds additional chlorophylls, carotenoids and specific lipids..

The protein resides in the plastid. It localises to the chloroplast thylakoid membrane. Functionally, one of the components of the core complex of photosystem II (PSII). It binds chlorophyll and helps catalyze the primary light-induced photochemical processes of PSII. PSII is a light-driven water:plastoquinone oxidoreductase, using light energy to abstract electrons from H(2)O, generating O(2) and a proton gradient subsequently used for ATP formation. The polypeptide is Photosystem II CP47 reaction center protein (Panax ginseng (Korean ginseng)).